The following is a 221-amino-acid chain: Enolase-phosphatase E1 (221 aa).

Belongs to the HAD-like hydrolase superfamily. MasA/MtnC family. As to quaternary structure, monomer. It depends on Mg(2+) as a cofactor.

It carries out the reaction 5-methylsulfanyl-2,3-dioxopentyl phosphate + H2O = 1,2-dihydroxy-5-(methylsulfanyl)pent-1-en-3-one + phosphate. The protein operates within amino-acid biosynthesis; L-methionine biosynthesis via salvage pathway; L-methionine from S-methyl-5-thio-alpha-D-ribose 1-phosphate: step 3/6. It functions in the pathway amino-acid biosynthesis; L-methionine biosynthesis via salvage pathway; L-methionine from S-methyl-5-thio-alpha-D-ribose 1-phosphate: step 4/6. Its function is as follows. Bifunctional enzyme that catalyzes the enolization of 2,3-diketo-5-methylthiopentyl-1-phosphate (DK-MTP-1-P) into the intermediate 2-hydroxy-3-keto-5-methylthiopentenyl-1-phosphate (HK-MTPenyl-1-P), which is then dephosphorylated to form the acireductone 1,2-dihydroxy-3-keto-5-methylthiopentene (DHK-MTPene). The sequence is that of Enolase-phosphatase E1 from Xanthobacter autotrophicus (strain ATCC BAA-1158 / Py2).